Consider the following 330-residue polypeptide: Phospho-N-acetylmuramoyl-pentapeptide-transferase (330 aa).

The next 9 membrane-spanning stretches (helical) occupy residues 13-33, 58-78, 83-103, 113-133, 152-172, 179-199, 209-229, 231-250, and 304-324; these read VFVFILSFAFSLILGPVLIPM, PTMGGMIFLIPVTVLAAFYAG, ILPLIFVTLGFGLIGFIDDFI, LYWNQKMFGLLLVAVTFAVYL, VSLGWLFVPFVVLVLIASTNA, LDGLAAGVTLIVTVFFTIVAM, MFSAMVAGGCLGFLTFNAYPA, IFMGDTGSLALGGAVGAIAI, and VKVVLVFWTITVLLCILGFFA.

The protein belongs to the glycosyltransferase 4 family. MraY subfamily. Mg(2+) is required as a cofactor.

The protein localises to the cell membrane. It catalyses the reaction UDP-N-acetyl-alpha-D-muramoyl-L-alanyl-gamma-D-glutamyl-meso-2,6-diaminopimeloyl-D-alanyl-D-alanine + di-trans,octa-cis-undecaprenyl phosphate = di-trans,octa-cis-undecaprenyl diphospho-N-acetyl-alpha-D-muramoyl-L-alanyl-D-glutamyl-meso-2,6-diaminopimeloyl-D-alanyl-D-alanine + UMP. Its pathway is cell wall biogenesis; peptidoglycan biosynthesis. Catalyzes the initial step of the lipid cycle reactions in the biosynthesis of the cell wall peptidoglycan: transfers peptidoglycan precursor phospho-MurNAc-pentapeptide from UDP-MurNAc-pentapeptide onto the lipid carrier undecaprenyl phosphate, yielding undecaprenyl-pyrophosphoryl-MurNAc-pentapeptide, known as lipid I. The sequence is that of Phospho-N-acetylmuramoyl-pentapeptide-transferase from Acetivibrio thermocellus (strain ATCC 27405 / DSM 1237 / JCM 9322 / NBRC 103400 / NCIMB 10682 / NRRL B-4536 / VPI 7372) (Clostridium thermocellum).